We begin with the raw amino-acid sequence, 453 residues long: MALPNKFFLWFCCFAWLCFPISLDSQPSRGEAQIVARTALESEAETWSLLKHLDGRHRPGLLSPLLNVLYDGHREPPRLQPDDRALSYMKRLYKAYATKEGTPKSNRSHLYNTVRLFTPCAQHKQAPGDQAAGTLPSVDLLFNLDRVTVVEHLFKSVLLYTFNNSISFPFPVKCICNLVIKEPEFSSKTLPRAPYSFTFNSQFEFRKKYKWIEIDVTAPLEPLVASHKRNIHMSVNFTCVKDQLQHPSARDSLFNMTLLLAPSLLLYLNDTSAQAFHRWHSLHPKRKPSQDPDQKRGLSACPMGEEAAEGVRLSRHRRDQESVSSELKKPLVPASFNLSEYFKQFLFPQNECELHDFRLSFSQLKWDNWIVAPHKYNPRYCKGDCPRAVGHRYGSPVHTMVMNIIHEKLDSSVPRPSCVPAKYSPLSVLAIEPDGSIAYKEYEDMIATKCTCR.

The first 25 residues, 1 to 25 (MALPNKFFLWFCCFAWLCFPISLDS), serve as a signal peptide directing secretion. Residues 26 to 318 (QPSRGEAQIV…EGVRLSRHRR (293 aa)) constitute a propeptide that is removed on maturation. N-linked (GlcNAc...) asparagine glycosylation is found at Asn106, Asn163, Asn236, Asn255, and Asn269. Positions 281 to 300 (SLHPKRKPSQDPDQKRGLSA) are disordered. Residue Asn337 is glycosylated (N-linked (GlcNAc...) asparagine). 3 cysteine pairs are disulfide-bonded: Cys352/Cys418, Cys381/Cys450, and Cys385/Cys452.

The protein belongs to the TGF-beta family. Homodimer or heterodimer (Potential). But, in contrast to other members of this family, cannot be disulfide-linked. In terms of processing, phosphorylated; phosphorylation is critical for GDF9 function.

It localises to the secreted. In terms of biological role, required for ovarian folliculogenesis. The protein is Growth/differentiation factor 9 (GDF9) of Bos taurus (Bovine).